The following is a 115-amino-acid chain: Succinate dehydrogenase assembly factor 3, mitochondrial (115 aa).

This sequence belongs to the complex I LYR family. SDHAF3 subfamily. As to quaternary structure, interacts with the iron-sulfur protein subunit within the SDH catalytic dimer.

It localises to the mitochondrion matrix. Plays an essential role in the assembly of succinate dehydrogenase (SDH), an enzyme complex (also referred to as respiratory complex II) that is a component of both the tricarboxylic acid (TCA) cycle and the mitochondrial electron transport chain, and which couples the oxidation of succinate to fumarate with the reduction of ubiquinone (coenzyme Q) to ubiquinol. Promotes maturation of the iron-sulfur protein subunit of the SDH catalytic dimer, protecting it from the deleterious effects of oxidants. May act together with SDHAF1. The polypeptide is Succinate dehydrogenase assembly factor 3, mitochondrial (acn9) (Nematostella vectensis (Starlet sea anemone)).